The sequence spans 392 residues: Isocitrate dehydrogenase [NAD] subunit gamma, mitochondrial (392 aa).

Residues 1-39 (MALKVATAAGGAVKAALRPALLWRPWEVLGSHEAPRRSF) constitute a mitochondrion transit peptide. Citrate-binding residues include threonine 119 and asparagine 132. Substrate contacts are provided by arginine 135, arginine 166, and aspartate 253. Mn(2+) is bound at residue aspartate 253. Residues asparagine 311, threonine 312, and asparagine 323 each coordinate ADP.

The protein belongs to the isocitrate and isopropylmalate dehydrogenases family. As to quaternary structure, heterooligomer of subunits alpha (IDH3A), beta (IDH3B), and gamma (IDH3G) in the apparent ratio of 2:1:1. The heterodimer containing one IDH3A and one IDH3B subunit and the heterodimer containing one IDH3A and one IDH3G subunit assemble into a heterotetramer (which contains two subunits of IDH3A, one of IDH3B and one of IDH3G) and further into the heterooctamer. Mg(2+) is required as a cofactor. The cofactor is Mn(2+).

The protein resides in the mitochondrion. Its activity is regulated as follows. The heterotetramer and the heterodimer composed of IDH3A and IDH3G subunits can be allosterically activated by citrate (CIT) or/and ADP, and the two activators can act independently or synergistically. The heterodimer composed of IDH3A and IDH3B subunits cannot be allosterically regulated and the allosteric regulation of the heterotetramer is through the IDH3G subunit and not the IDH3B subunit. The IDH3G subunit contains the allosteric site which consists of a CIT-binding site and an ADP-binding site, and the binding of CIT and ADP causes conformational changes at the allosteric site which are transmitted to the active site in the catalytic subunit (IDH3A) through a cascade of conformational changes at the heterodimer interface, leading to stabilization of the isocitrate-binding at the active site and thus activation of the enzyme. ATP can activate the heterotetramer and the heterodimer composed of IDH3A and IDH3G subunits at low concentrations but inhibits their activities at high concentrations, whereas ATP exhibits only inhibitory effect on the heterodimer composed of IDH3A and IDH3B subunits. In terms of biological role, regulatory subunit which plays a role in the allosteric regulation of the enzyme catalyzing the decarboxylation of isocitrate (ICT) into alpha-ketoglutarate. The heterodimer composed of the alpha (IDH3A) and beta (IDH3B) subunits and the heterodimer composed of the alpha (IDH3A) and gamma (IDH3G) subunits, have considerable basal activity but the full activity of the heterotetramer (containing two subunits of IDH3A, one of IDH3B and one of IDH3G) requires the assembly and cooperative function of both heterodimers. The sequence is that of Isocitrate dehydrogenase [NAD] subunit gamma, mitochondrial (IDH3G) from Bos taurus (Bovine).